The following is a 163-amino-acid chain: Urease accessory protein UreE (163 aa).

The disordered stretch occupies residues 144-163 (QPEPGAYGGSSAGSHDGHHH).

This sequence belongs to the UreE family.

It localises to the cytoplasm. Involved in urease metallocenter assembly. Binds nickel. Probably functions as a nickel donor during metallocenter assembly. The chain is Urease accessory protein UreE from Aliivibrio fischeri (strain MJ11) (Vibrio fischeri).